The following is a 191-amino-acid chain: Protein G1-like1 (191 aa).

Residues 1–29 (MDMIGMASPAESPGGGGTARPSRYESQKR) are disordered. One can recognise an ALOG domain in the interval 23-150 (RYESQKRRDW…ARGIAYEKKR (128 aa)). Positions 148–152 (KKRRK) match the Nuclear localization signal motif. Residues 152-179 (KRAAASHTKQKQQQQQLVEQAAAAAEAH) are a coiled coil.

This sequence belongs to the plant homeotic and developmental regulators ALOG protein family.

Its subcellular location is the nucleus. Its function is as follows. Probable transcription regulator that acts as a developmental regulator by promoting cell growth in response to light. The chain is Protein G1-like1 from Oryza sativa subsp. indica (Rice).